The following is a 404-amino-acid chain: MKLPIYFDYAATTPVDPRVAQKMMQYMTMDGIFGNPASRSHRYGWQAEEAVDVARSQVADLINADHREIVFTSGATESNNLAIKGVAHFYQKKGKHIITSKTEHKAVLDTCRQLEREGFEVTYLEPGVNGIIPMERLEAAMRDDTILLSLMHVNNEIGVVHDIDAIGELCRSKGIIFHVDAAQSAGKLPIDVQITKVDLMSISGHKMYGPKGIGALYVRRKPRIRLESQMHGGGHERGMRSGTLATHQIVGLGEAAAIAKADMESDNARIHALRDRLWNGIKDIEETYVNGDFEQRYCGNLNVSFNFVEGESLMMALKDLAVSSGSACTSASLEPSYVLRALGLSDEMAHSSIRFSIGRFTTEEEVDYAIGIIQGSIGKLREMSPLWEMFKDGVDLSKVEWVHH.

Pyridoxal 5'-phosphate contacts are provided by residues 75–76 (AT), N155, Q183, and 203–205 (SGH). K206 carries the post-translational modification N6-(pyridoxal phosphate)lysine. T243 is a pyridoxal 5'-phosphate binding site. The Cysteine persulfide intermediate role is filled by C328. Position 328 (C328) interacts with [2Fe-2S] cluster.

Belongs to the class-V pyridoxal-phosphate-dependent aminotransferase family. NifS/IscS subfamily. As to quaternary structure, homodimer. Forms a heterotetramer with IscU, interacts with other sulfur acceptors. Requires pyridoxal 5'-phosphate as cofactor.

It localises to the cytoplasm. It catalyses the reaction (sulfur carrier)-H + L-cysteine = (sulfur carrier)-SH + L-alanine. It functions in the pathway cofactor biosynthesis; iron-sulfur cluster biosynthesis. Master enzyme that delivers sulfur to a number of partners involved in Fe-S cluster assembly, tRNA modification or cofactor biosynthesis. Catalyzes the removal of elemental sulfur atoms from cysteine to produce alanine. Functions as a sulfur delivery protein for Fe-S cluster synthesis onto IscU, an Fe-S scaffold assembly protein, as well as other S acceptor proteins. This chain is Cysteine desulfurase IscS, found in Shewanella amazonensis (strain ATCC BAA-1098 / SB2B).